The chain runs to 306 residues: Pantothenate kinase (306 aa).

91-98 (GSVAVGKS) is a binding site for ATP.

This sequence belongs to the prokaryotic pantothenate kinase family.

Its subcellular location is the cytoplasm. The enzyme catalyses (R)-pantothenate + ATP = (R)-4'-phosphopantothenate + ADP + H(+). It functions in the pathway cofactor biosynthesis; coenzyme A biosynthesis; CoA from (R)-pantothenate: step 1/5. The chain is Pantothenate kinase from Streptococcus pneumoniae (strain JJA).